The sequence spans 495 residues: N-succinylglutamate 5-semialdehyde dehydrogenase (495 aa).

228–233 lines the NAD(+) pocket; it reads GSYATG. Catalysis depends on residues Glu-251 and Cys-285.

Belongs to the aldehyde dehydrogenase family. AstD subfamily.

The enzyme catalyses N-succinyl-L-glutamate 5-semialdehyde + NAD(+) + H2O = N-succinyl-L-glutamate + NADH + 2 H(+). The protein operates within amino-acid degradation; L-arginine degradation via AST pathway; L-glutamate and succinate from L-arginine: step 4/5. Functionally, catalyzes the NAD-dependent reduction of succinylglutamate semialdehyde into succinylglutamate. In Legionella pneumophila (strain Paris), this protein is N-succinylglutamate 5-semialdehyde dehydrogenase.